The sequence spans 411 residues: D-galactonate dehydratase family member SBI_01856 (411 aa).

The substrate site is built by Asn-45 and His-130. Residue Tyr-167 is the Proton donor/acceptor of the active site. Asp-219 is a Mg(2+) binding site. Catalysis depends on His-221, which acts as the Proton donor/acceptor. Residues Glu-245 and Glu-271 each contribute to the Mg(2+) site. 5 residues coordinate substrate: Glu-271, Arg-292, His-321, Asp-325, and Glu-348.

Belongs to the mandelate racemase/muconate lactonizing enzyme family. GalD subfamily. Mg(2+) is required as a cofactor.

It carries out the reaction D-gluconate = 2-dehydro-3-deoxy-D-gluconate + H2O. Functionally, has low D-gluconate dehydratase activity (in vitro), suggesting that it has no significant role in D-gluconate degradation in vivo. Has no detectable activity with a panel of 70 other acid sugars (in vitro). The sequence is that of D-galactonate dehydratase family member SBI_01856 from Streptomyces bingchenggensis (strain BCW-1).